Reading from the N-terminus, the 258-residue chain is Arylamine N-acetyltransferase 1 (258 aa).

Residue cysteine 59 is the Acyl-thioester intermediate of the active site. Position 97-98 (isoleucine 97–histidine 98) interacts with substrate. Residues histidine 98 and aspartate 113 contribute to the active site. Tyrosine 199 and threonine 205 together coordinate CoA.

It belongs to the arylamine N-acetyltransferase family.

Its subcellular location is the cytoplasm. The enzyme catalyses an arylamine + acetyl-CoA = an N-acetylarylamine + CoA. In terms of biological role, participates in the detoxification of a plethora of hydrazine and arylamine drugs. This chain is Arylamine N-acetyltransferase 1 (NAT1), found in Felis catus (Cat).